A 321-amino-acid polypeptide reads, in one-letter code: tRNA U34 carboxymethyltransferase (321 aa).

Carboxy-S-adenosyl-L-methionine contacts are provided by residues lysine 90, tryptophan 104, lysine 109, glycine 129, 151-153 (DPT), 180-181 (IE), methionine 195, tyrosine 199, and arginine 314.

The protein belongs to the class I-like SAM-binding methyltransferase superfamily. CmoB family. As to quaternary structure, homotetramer.

The catalysed reaction is carboxy-S-adenosyl-L-methionine + 5-hydroxyuridine(34) in tRNA = 5-carboxymethoxyuridine(34) in tRNA + S-adenosyl-L-homocysteine + H(+). In terms of biological role, catalyzes carboxymethyl transfer from carboxy-S-adenosyl-L-methionine (Cx-SAM) to 5-hydroxyuridine (ho5U) to form 5-carboxymethoxyuridine (cmo5U) at position 34 in tRNAs. This Histophilus somni (strain 2336) (Haemophilus somnus) protein is tRNA U34 carboxymethyltransferase.